A 275-amino-acid polypeptide reads, in one-letter code: MNALQAEIIAALKTQPTIDPAKEIRRSVDFMKAYLKKNTFLKSYVLGISGGQDSTLVGALTEKAMQEMRAETGDESYQFIAVRLPYGEQADESDAMAAIEFMAADQVKRVNIKGSVDAMVQSLAETGVTVSDFNKGNIKARVRMIAQYGIAGENSGAVLGTDHSAESITGFYTKFGDGGADLVPIFRLNKRQGKAMLAELGAPKHLYEKVPTADLEEDRPALPDELALGVTYDQIDDYLEGRQVSEEAATKIENWHKKTAHKRHLPITIYDTFWQ.

Position 47 to 54 (47 to 54 (GISGGQDS)) interacts with ATP. Asp53 serves as a coordination point for Mg(2+). Deamido-NAD(+) is bound at residue Arg141. Position 161 (Thr161) interacts with ATP. Glu166 is a Mg(2+) binding site. Deamido-NAD(+)-binding residues include Lys174 and Asp181. 2 residues coordinate ATP: Lys190 and Thr212. Residue 261–262 (HK) participates in deamido-NAD(+) binding.

This sequence belongs to the NAD synthetase family. Homodimer.

The catalysed reaction is deamido-NAD(+) + NH4(+) + ATP = AMP + diphosphate + NAD(+) + H(+). It participates in cofactor biosynthesis; NAD(+) biosynthesis; NAD(+) from deamido-NAD(+) (ammonia route): step 1/1. Functionally, catalyzes the ATP-dependent amidation of deamido-NAD to form NAD. Uses ammonia as a nitrogen source. This Latilactobacillus sakei subsp. sakei (strain 23K) (Lactobacillus sakei subsp. sakei) protein is NH(3)-dependent NAD(+) synthetase.